We begin with the raw amino-acid sequence, 298 residues long: Phosphatidylglycerol--prolipoprotein diacylglyceryl transferase (298 aa).

The next 3 membrane-spanning stretches (helical) occupy residues 17–37 (LAVRWYGLMYLVGFIAAIVVG), 59–79 (MMFYGVLGTVLGGRLGYVLFY), and 97–117 (GGMSFHGGFLGVTLAMMLFAW). Arg-142 contributes to the a 1,2-diacyl-sn-glycero-3-phospho-(1'-sn-glycerol) binding site. 2 consecutive transmembrane segments (helical) span residues 230-250 (MGAISALFLIGYGLARFTVEF) and 257-277 (FLGLLALGLSMGQWLSLPMIV).

Belongs to the Lgt family.

Its subcellular location is the cell inner membrane. The catalysed reaction is L-cysteinyl-[prolipoprotein] + a 1,2-diacyl-sn-glycero-3-phospho-(1'-sn-glycerol) = an S-1,2-diacyl-sn-glyceryl-L-cysteinyl-[prolipoprotein] + sn-glycerol 1-phosphate + H(+). It functions in the pathway protein modification; lipoprotein biosynthesis (diacylglyceryl transfer). Functionally, catalyzes the transfer of the diacylglyceryl group from phosphatidylglycerol to the sulfhydryl group of the N-terminal cysteine of a prolipoprotein, the first step in the formation of mature lipoproteins. The chain is Phosphatidylglycerol--prolipoprotein diacylglyceryl transferase from Burkholderia cenocepacia (strain ATCC BAA-245 / DSM 16553 / LMG 16656 / NCTC 13227 / J2315 / CF5610) (Burkholderia cepacia (strain J2315)).